Consider the following 165-residue polypeptide: Large ribosomal subunit protein uL10 (165 aa).

Belongs to the universal ribosomal protein uL10 family. As to quaternary structure, part of the ribosomal stalk of the 50S ribosomal subunit. The N-terminus interacts with L11 and the large rRNA to form the base of the stalk. The C-terminus forms an elongated spine to which L12 dimers bind in a sequential fashion forming a multimeric L10(L12)X complex.

In terms of biological role, forms part of the ribosomal stalk, playing a central role in the interaction of the ribosome with GTP-bound translation factors. This Buchnera aphidicola subsp. Schizaphis graminum (strain Sg) protein is Large ribosomal subunit protein uL10.